Here is a 323-residue protein sequence, read N- to C-terminus: Arginase, hepatic (323 aa).

Mn(2+) contacts are provided by histidine 102, aspartate 125, histidine 127, and aspartate 129. Substrate-binding positions include 127–131 (HADIN), 138–140 (SGN), and aspartate 184. Positions 233 and 235 each coordinate Mn(2+). Substrate-binding residues include threonine 247 and glutamate 278.

It belongs to the arginase family. As to quaternary structure, homotrimer. Mn(2+) serves as cofactor.

The catalysed reaction is L-arginine + H2O = urea + L-ornithine. The protein operates within nitrogen metabolism; urea cycle; L-ornithine and urea from L-arginine: step 1/1. This is Arginase, hepatic from Aquarana catesbeiana (American bullfrog).